The following is a 430-amino-acid chain: Trigger factor (430 aa).

The PPIase FKBP-type domain maps to 165-250 (TDIAIFDFEG…LHQIKTKKIP (86 aa)).

This sequence belongs to the FKBP-type PPIase family. Tig subfamily.

Its subcellular location is the cytoplasm. It carries out the reaction [protein]-peptidylproline (omega=180) = [protein]-peptidylproline (omega=0). Functionally, involved in protein export. Acts as a chaperone by maintaining the newly synthesized protein in an open conformation. Functions as a peptidyl-prolyl cis-trans isomerase. The protein is Trigger factor of Onion yellows phytoplasma (strain OY-M).